A 261-amino-acid polypeptide reads, in one-letter code: Claudin-18 (261 aa).

The Cytoplasmic segment spans residues 1–6; it reads MSTTTC. The helical transmembrane segment at 7–27 threads the bilayer; that stretch reads QVVAFLLSILGLAGCIAATGM. Over 28–80 the chain is Extracellular; that stretch reads DMWSTQDLYDNPVTSVFQYEGLWRSCVRQSSGFTECRPYFTILGLPAMLQAVR. Residues 81–101 traverse the membrane as a helical segment; the sequence is ALMIVGIVLGAIGLLVSIFAL. The Cytoplasmic segment spans residues 102-122; it reads KCIRIGSMEDSAKANMTLTSG. A helical transmembrane segment spans residues 123-143; the sequence is IMFIVSGLCAIAGVSVFANML. Residues 144-174 are Extracellular-facing; that stretch reads VTNFWMSTANMYTGMGGMVQTVQTRYTFGAA. The helical transmembrane segment at 175 to 195 threads the bilayer; sequence LFVGWVAGGLTLIGGVMMCIA. Residues 195-261 form a required for role in regulation of RANKL-induced osteoclast differentiation region; that stretch reads ACRGLAPEET…QSYPSKHDYV (67 aa). Residues 196–261 are Cytoplasmic-facing; it reads CRGLAPEETN…QSYPSKHDYV (66 aa). Serine 214 is subject to Phosphoserine. The segment at 242–261 is disordered; the sequence is DGGARTEDEVQSYPSKHDYV.

It belongs to the claudin family. In terms of assembly, interacts with TJP2/ZO-2. Interacts with TJP1/ZO-1. Interacts with YAP1 (phosphorylated); the interaction sequesters YAP1 away from the nucleus and thereby restricts transcription of YAP1 target genes. Interacts with CLDN19. As to expression, expression is restricted to the lung. In terms of tissue distribution, expression is restricted to the stomach mucosa where it is predominantly observed in the epithelial cells of the pit region and the base of the gastric glands including exocrine and endocrine cells (at protein level).

It localises to the cell junction. It is found in the tight junction. The protein localises to the cell membrane. Its subcellular location is the lateral cell membrane. Involved in alveolar fluid homeostasis via regulation of alveolar epithelial tight junction composition and therefore ion transport and solute permeability, potentially via downstream regulation of the actin cytoskeleton organization and beta-2-adrenergic signaling. Required for lung alveolarization and maintenance of the paracellular alveolar epithelial barrier. Acts to maintain epithelial progenitor cell proliferation and organ size, via regulation of YAP1 localization away from the nucleus and thereby restriction of YAP1 target gene transcription. Acts as a negative regulator of RANKL-induced osteoclast differentiation, potentially via relocation of TJP2/ZO-2 away from the nucleus, subsequently involved in bone resorption in response to calcium deficiency. Mediates the osteoprotective effects of estrogen, potentially via acting downstream of estrogen signaling independently of RANKL signaling pathways. Functionally, involved in the maintenance of homeostasis of the alveolar microenvironment via regulation of pH and subsequent T-cell activation in the alveolar space, is therefore indirectly involved in limiting C.neoformans infection. In terms of biological role, required for the formation of the gastric paracellular barrier via its role in tight junction formation, thereby involved in the response to gastric acidification. The sequence is that of Claudin-18 (CLDN18) from Homo sapiens (Human).